A 147-amino-acid chain; its full sequence is Ponticulin-like protein C3 (147 aa).

A signal peptide spans 1–20 (MKFTKSLLLLIVAVFASSNA). A lipid anchor (GPI-like-anchor amidated asparagine) is attached at Asn-118. Asn-118 carries N-linked (GlcNAc...) asparagine glycosylation. Residues 119–147 (SSESDSSDSTRIGASFALFALALLSMLAL) constitute a propeptide, removed in mature form.

The protein belongs to the ponticulin family. Post-translationally, the GPI-like-anchor contains a phosphoceramide group, rather than a phosphatidyl group.

It is found in the cell membrane. This is Ponticulin-like protein C3 (ponC3) from Dictyostelium discoideum (Social amoeba).